Reading from the N-terminus, the 340-residue chain is Coproporphyrin III ferrochelatase (340 aa).

Fe-coproporphyrin III is bound by residues Ser-52 and Tyr-121. Fe(2+) contacts are provided by His-181 and Glu-264.

The protein belongs to the ferrochelatase family.

The protein localises to the cytoplasm. The catalysed reaction is Fe-coproporphyrin III + 2 H(+) = coproporphyrin III + Fe(2+). Its pathway is porphyrin-containing compound metabolism; protoheme biosynthesis. Its function is as follows. Involved in coproporphyrin-dependent heme b biosynthesis. Catalyzes the insertion of ferrous iron into coproporphyrin III to form Fe-coproporphyrin III. The polypeptide is Coproporphyrin III ferrochelatase (Mycolicibacterium smegmatis (strain ATCC 700084 / mc(2)155) (Mycobacterium smegmatis)).